The following is a 278-amino-acid chain: Large ribosomal subunit protein uL2 (278 aa).

2 disordered regions span residues 29-55 (PEKS…RHQG) and 225-278 (VMNP…NKKR). A compositionally biased stretch (basic residues) spans 258–278 (RSNKKASNKYIVRRRTKNKKR).

The protein belongs to the universal ribosomal protein uL2 family. Part of the 50S ribosomal subunit. Forms a bridge to the 30S subunit in the 70S ribosome. Post-translationally, the N-terminus is blocked. Phosphorylated on serine and threonine residues.

Functionally, one of the primary rRNA binding proteins. Required for association of the 30S and 50S subunits to form the 70S ribosome, for tRNA binding and peptide bond formation. It has been suggested to have peptidyltransferase activity; this is somewhat controversial. Makes several contacts with the 16S rRNA in the 70S ribosome. This is Large ribosomal subunit protein uL2 from Streptomyces collinus.